We begin with the raw amino-acid sequence, 945 residues long: Translation initiation factor IF-2 (945 aa).

Disordered stretches follow at residues 52-80 (RSHG…DSSG) and 96-357 (MKRD…FQAP). Over residues 153–175 (PEPEPIVEPEPEPEPEPEPEPQP) the composition is skewed to acidic residues. 2 stretches are compositionally biased toward basic and acidic residues: residues 215 to 283 (DEER…KEAA) and 294 to 310 (AKTE…RTAR). In terms of domain architecture, tr-type G spans 445 to 614 (PRAPVVTVMG…LLQAEVLELT (170 aa)). A G1 region spans residues 454–461 (GHVDHGKT). Residue 454–461 (GHVDHGKT) participates in GTP binding. The interval 479–483 (GITQH) is G2. The G3 stretch occupies residues 500–503 (DTPG). Residues 500–504 (DTPGH) and 554–557 (NKID) each bind GTP. A G4 region spans residues 554–557 (NKID). The tract at residues 590–592 (SAK) is G5.

The protein belongs to the TRAFAC class translation factor GTPase superfamily. Classic translation factor GTPase family. IF-2 subfamily.

The protein resides in the cytoplasm. Functionally, one of the essential components for the initiation of protein synthesis. Protects formylmethionyl-tRNA from spontaneous hydrolysis and promotes its binding to the 30S ribosomal subunits. Also involved in the hydrolysis of GTP during the formation of the 70S ribosomal complex. This is Translation initiation factor IF-2 from Aromatoleum aromaticum (strain DSM 19018 / LMG 30748 / EbN1) (Azoarcus sp. (strain EbN1)).